The chain runs to 166 residues: MFIKGVILSSYGVNGYARIKSISNNFCDFINLKNNKVLLKKSNGFAIEVKVIDVNIKSNSLFLKFEGIDAPESVKPLIGFELWVDDSLASSLKEGEYYLGKLIGYTIVNDNRKLGEVVAFFEYLNNVFLEVKVGIKFFFIPFLSIYIGNIDAREKTIELKVLDLLR.

A PRC barrel domain is found at 94–165; that stretch reads EGEYYLGKLI…TIELKVLDLL (72 aa).

It belongs to the RimM family. As to quaternary structure, binds ribosomal protein uS19.

The protein localises to the cytoplasm. Functionally, an accessory protein needed during the final step in the assembly of 30S ribosomal subunit, possibly for assembly of the head region. Essential for efficient processing of 16S rRNA. May be needed both before and after RbfA during the maturation of 16S rRNA. It has affinity for free ribosomal 30S subunits but not for 70S ribosomes. The polypeptide is Ribosome maturation factor RimM (Borreliella afzelii (strain PKo) (Borrelia afzelii)).